The sequence spans 68 residues: Phylloseptin-SP1 (68 aa).

The N-terminal stretch at 1 to 22 (MAFLKKSLFLVLFLGLVSLSIC) is a signal peptide. The propeptide occupies 23-45 (EEKERETKEEENEQEDDNREEKR). At Leu67 the chain carries Leucine amide.

In terms of tissue distribution, expressed by the skin glands.

Its subcellular location is the secreted. In terms of biological role, weak cationic amphipathic alpha-helical antimicrobial peptide with weak activity against Gram-positive and Gram-negative bacteria and fungi. Has been tested against E.coli (MIC&gt;217.69 uM), S.aureus (MIC&gt;217.69 uM), K.pneumoniae (MIC&gt;189.00 uM) and C.albicans (MIC&gt;217.69 uM). Shows a moderate hemolytic activity. The chain is Phylloseptin-SP1 from Agalychnis spurrelli (Gliding leaf frog).